The chain runs to 70 residues: uncharacterized protein (70 aa).

It is found in the plastid. This is an uncharacterized protein from Euglena longa (Euglenophycean alga).